The primary structure comprises 362 residues: Phosphoserine aminotransferase (362 aa).

Residues serine 9 and arginine 42 each coordinate L-glutamate. Residues 76 to 77, tryptophan 102, threonine 153, aspartate 174, and glutamine 197 contribute to the pyridoxal 5'-phosphate site; that span reads GR. N6-(pyridoxal phosphate)lysine is present on lysine 198. 239-240 is a pyridoxal 5'-phosphate binding site; it reads NT.

It belongs to the class-V pyridoxal-phosphate-dependent aminotransferase family. SerC subfamily. In terms of assembly, homodimer. It depends on pyridoxal 5'-phosphate as a cofactor.

Its subcellular location is the cytoplasm. It catalyses the reaction O-phospho-L-serine + 2-oxoglutarate = 3-phosphooxypyruvate + L-glutamate. It carries out the reaction 4-(phosphooxy)-L-threonine + 2-oxoglutarate = (R)-3-hydroxy-2-oxo-4-phosphooxybutanoate + L-glutamate. The protein operates within amino-acid biosynthesis; L-serine biosynthesis; L-serine from 3-phospho-D-glycerate: step 2/3. It functions in the pathway cofactor biosynthesis; pyridoxine 5'-phosphate biosynthesis; pyridoxine 5'-phosphate from D-erythrose 4-phosphate: step 3/5. Its function is as follows. Catalyzes the reversible conversion of 3-phosphohydroxypyruvate to phosphoserine and of 3-hydroxy-2-oxo-4-phosphonooxybutanoate to phosphohydroxythreonine. The protein is Phosphoserine aminotransferase of Salmonella agona (strain SL483).